A 270-amino-acid polypeptide reads, in one-letter code: Dermonecrotic toxin LsaSicTox-alphaIB1av (270 aa).

Residue histidine 2 is part of the active site. Residues glutamate 22 and aspartate 24 each contribute to the Mg(2+) site. The active-site Nucleophile is the histidine 38. Intrachain disulfides connect cysteine 42-cysteine 48 and cysteine 44-cysteine 187. Aspartate 82 is a Mg(2+) binding site.

Belongs to the arthropod phospholipase D family. Class II subfamily. The cofactor is Mg(2+). As to expression, expressed by the venom gland.

The protein resides in the secreted. The enzyme catalyses an N-(acyl)-sphingosylphosphocholine = an N-(acyl)-sphingosyl-1,3-cyclic phosphate + choline. It catalyses the reaction an N-(acyl)-sphingosylphosphoethanolamine = an N-(acyl)-sphingosyl-1,3-cyclic phosphate + ethanolamine. The catalysed reaction is a 1-acyl-sn-glycero-3-phosphocholine = a 1-acyl-sn-glycero-2,3-cyclic phosphate + choline. It carries out the reaction a 1-acyl-sn-glycero-3-phosphoethanolamine = a 1-acyl-sn-glycero-2,3-cyclic phosphate + ethanolamine. Functionally, dermonecrotic toxins cleave the phosphodiester linkage between the phosphate and headgroup of certain phospholipids (sphingolipid and lysolipid substrates), forming an alcohol (often choline) and a cyclic phosphate. This toxin acts on sphingomyelin (SM). It may also act on ceramide phosphoethanolamine (CPE), lysophosphatidylcholine (LPC) and lysophosphatidylethanolamine (LPE), but not on lysophosphatidylserine (LPS), and lysophosphatidylglycerol (LPG). It acts by transphosphatidylation, releasing exclusively cyclic phosphate products as second products. Induces dermonecrosis, hemolysis, increased vascular permeability, edema, inflammatory response, and platelet aggregation. The protein is Dermonecrotic toxin LsaSicTox-alphaIB1av of Loxosceles sabina (Tucson recluse spider).